Reading from the N-terminus, the 699-residue chain is Polyribonucleotide nucleotidyltransferase (699 aa).

Residues Asp487 and Asp493 each contribute to the Mg(2+) site. In terms of domain architecture, KH spans 554 to 613 (PRMLNMKINPEKIRDVIGKGGAVIRALQEETGTVIEIEDDGSITISSVSAEGAQKAKARI). One can recognise an S1 motif domain in the interval 623–691 (GKVYEGTVVR…ERGKIRLSMK (69 aa)).

This sequence belongs to the polyribonucleotide nucleotidyltransferase family. Mg(2+) is required as a cofactor.

The protein localises to the cytoplasm. The enzyme catalyses RNA(n+1) + phosphate = RNA(n) + a ribonucleoside 5'-diphosphate. Involved in mRNA degradation. Catalyzes the phosphorolysis of single-stranded polyribonucleotides processively in the 3'- to 5'-direction. The chain is Polyribonucleotide nucleotidyltransferase from Azoarcus sp. (strain BH72).